The primary structure comprises 326 residues: 3-methyl-2-oxobutanoate hydroxymethyltransferase 1 (326 aa).

Mg(2+) is bound by residues aspartate 52, aspartate 91, and glutamate 122. 3-methyl-2-oxobutanoate-binding positions include 52 to 53 (DS) and aspartate 91. Catalysis depends on glutamate 189, which acts as the Proton acceptor.

The protein belongs to the PanB family. As to quaternary structure, homodecamer; pentamer of dimers. Mg(2+) is required as a cofactor.

Its subcellular location is the cytoplasm. The catalysed reaction is 3-methyl-2-oxobutanoate + (6R)-5,10-methylene-5,6,7,8-tetrahydrofolate + H2O = 2-dehydropantoate + (6S)-5,6,7,8-tetrahydrofolate. It participates in cofactor biosynthesis; (R)-pantothenate biosynthesis; (R)-pantoate from 3-methyl-2-oxobutanoate: step 1/2. Functionally, catalyzes the reversible reaction in which hydroxymethyl group from 5,10-methylenetetrahydrofolate is transferred onto alpha-ketoisovalerate to form ketopantoate. The chain is 3-methyl-2-oxobutanoate hydroxymethyltransferase 1 from Bradyrhizobium diazoefficiens (strain JCM 10833 / BCRC 13528 / IAM 13628 / NBRC 14792 / USDA 110).